A 447-amino-acid polypeptide reads, in one-letter code: Tubulin beta chain (447 aa).

8 residues coordinate GTP: glutamine 11, glutamate 69, serine 138, glycine 142, threonine 143, glycine 144, asparagine 204, and asparagine 226. Mg(2+) is bound at residue glutamate 69. The tract at residues 427 to 447 (DAGIDEEEEEYEEELPLEGEE) is disordered. Residues 429 to 447 (GIDEEEEEYEEELPLEGEE) are compositionally biased toward acidic residues.

The protein belongs to the tubulin family. Dimer of alpha and beta chains. A typical microtubule is a hollow water-filled tube with an outer diameter of 25 nm and an inner diameter of 15 nM. Alpha-beta heterodimers associate head-to-tail to form protofilaments running lengthwise along the microtubule wall with the beta-tubulin subunit facing the microtubule plus end conferring a structural polarity. Microtubules usually have 13 protofilaments but different protofilament numbers can be found in some organisms and specialized cells. Mg(2+) is required as a cofactor.

The protein resides in the cytoplasm. The protein localises to the cytoskeleton. Functionally, tubulin is the major constituent of microtubules, a cylinder consisting of laterally associated linear protofilaments composed of alpha- and beta-tubulin heterodimers. Microtubules grow by the addition of GTP-tubulin dimers to the microtubule end, where a stabilizing cap forms. Below the cap, tubulin dimers are in GDP-bound state, owing to GTPase activity of alpha-tubulin. This is Tubulin beta chain (TUB2) from Hapsidospora chrysogena (Acremonium chrysogenum).